The chain runs to 306 residues: Glutathione transport system permease protein GsiC (306 aa).

Over 1-8 (MLNYVIKR) the chain is Cytoplasmic. The chain crosses the membrane as a helical span at residues 9-29 (LLGLIPTLFIVSVLVFLFVHM). Residues 30–102 (LPGDPARLIA…SRFMPTLWLT (73 aa)) lie on the Periplasmic side of the membrane. The ABC transmembrane type-1 domain occupies 95–292 (FMPTLWLTIT…LEFILINLVV (198 aa)). A helical membrane pass occupies residues 103 to 123 (ITSMVWAVIFGMAAGIIAAVW). The Cytoplasmic portion of the chain corresponds to 124 to 134 (RNRWPDRLSMT). Residues 135–155 (IAVSGISFPAFALGMFLIQVF) traverse the membrane as a helical segment. The Periplasmic portion of the chain corresponds to 156–168 (SVELGWLPTVGAD). A helical membrane pass occupies residues 169–189 (SWQHYILPSLTLGAAVAAVMA). The Cytoplasmic segment spans residues 190-228 (RFTRASFVDVLSEDYMRTARAKGVSETWVVLKHGLRNAM). Residues 229-249 (IPVVTMMGLQFGFLLGGSIVV) form a helical membrane-spanning segment. At 250 to 277 (EKVFNWPGLGRLLVDSVEMRDYPVIQAE) the chain is on the periplasmic side. A helical transmembrane segment spans residues 278–298 (ILLFSLEFILINLVVDVLYAA). Topologically, residues 299–306 (INPAIRYK) are cytoplasmic.

This sequence belongs to the binding-protein-dependent transport system permease family. The complex is composed of two ATP-binding proteins (GsiA), two transmembrane proteins (GsiC and GsiD) and a solute-binding protein (GsiB).

The protein localises to the cell inner membrane. Functionally, part of the ABC transporter complex GsiABCD involved in glutathione import. Probably responsible for the translocation of the substrate across the membrane. This chain is Glutathione transport system permease protein GsiC, found in Shigella flexneri serotype 5b (strain 8401).